Consider the following 631-residue polypeptide: DNA mismatch repair protein MutL (631 aa).

This sequence belongs to the DNA mismatch repair MutL/HexB family.

Functionally, this protein is involved in the repair of mismatches in DNA. It is required for dam-dependent methyl-directed DNA mismatch repair. May act as a 'molecular matchmaker', a protein that promotes the formation of a stable complex between two or more DNA-binding proteins in an ATP-dependent manner without itself being part of a final effector complex. The polypeptide is DNA mismatch repair protein MutL (Mannheimia succiniciproducens (strain KCTC 0769BP / MBEL55E)).